The chain runs to 987 residues: Ephrin type-B receptor 4a (987 aa).

Positions 1 to 24 are cleaved as a signal peptide; that stretch reads MELFSRNVAAFWIILLEFLLGSVA. The Extracellular portion of the chain corresponds to 25 to 548; the sequence is EEEVLMNTKT…DSSSPLLVTG (524 aa). The Eph LBD domain maps to 26-205; it reads EEVLMNTKTE…FFKKCPALTR (180 aa). 2 disulfide bridges follow: C70/C187 and C104/C114. A disordered region spans residues 319-340; the sequence is DSADTPCTRPPSSPRSPVPQVN. Pro residues predominate over residues 326 to 335; the sequence is TRPPSSPRSP. Fibronectin type-III domains lie at 328 to 438 and 442 to 536; these read PPSS…TSPN and LVSG…TLPD. The chain crosses the membrane as a helical span at residues 549–569; that stretch reads ILIAMGMLLLIIVIGAAIYCI. Over 570-987 the chain is Cytoplasmic; it reads RKQNNYKDPE…QNKAPGNVLY (418 aa). A Protein kinase domain is found at 621–884; that stretch reads VKIEEVIGAG…NIVSALDKLI (264 aa). Residues 627–635 and K653 contribute to the ATP site; that span reads IGAGEFGEV. The Proton acceptor role is filled by D746. The SAM domain occupies 914-978; it reads SSCGTVGDWL…LSSIEALGIQ (65 aa).

It belongs to the protein kinase superfamily. Tyr protein kinase family. Ephrin receptor subfamily.

The protein resides in the cell membrane. It catalyses the reaction L-tyrosyl-[protein] + ATP = O-phospho-L-tyrosyl-[protein] + ADP + H(+). Functionally, receptor tyrosine kinase which binds promiscuously transmembrane ephrin-B family ligands residing on adjacent cells, leading to contact-dependent bidirectional signaling into neighboring cells. The signaling pathway downstream of the receptor is referred to as forward signaling while the signaling pathway downstream of the ephrin ligand is referred to as reverse signaling. Together with its cognate ligand/functional ligand EFNB2 is involved in the regulation of cell adhesion and cell migration, and plays a central role in heart morphogenesis, angiogenesis and blood vessel remodeling and permeability. EPHB4-mediated forward signaling controls cellular repulsion and segregation from EFNB2-expressing cells. Involved in somitogenesis. The sequence is that of Ephrin type-B receptor 4a from Danio rerio (Zebrafish).